The following is a 249-amino-acid chain: Triosephosphate isomerase (249 aa).

11-13 is a substrate binding site; that stretch reads NWK. His-91 functions as the Electrophile in the catalytic mechanism. Glu-163 acts as the Proton acceptor in catalysis. Residues Gly-169, Ser-208, and 229 to 230 each bind substrate; that span reads GG.

The protein belongs to the triosephosphate isomerase family. As to quaternary structure, homodimer.

The protein localises to the cytoplasm. The enzyme catalyses D-glyceraldehyde 3-phosphate = dihydroxyacetone phosphate. The protein operates within carbohydrate biosynthesis; gluconeogenesis. Its pathway is carbohydrate degradation; glycolysis; D-glyceraldehyde 3-phosphate from glycerone phosphate: step 1/1. In terms of biological role, involved in the gluconeogenesis. Catalyzes stereospecifically the conversion of dihydroxyacetone phosphate (DHAP) to D-glyceraldehyde-3-phosphate (G3P). The sequence is that of Triosephosphate isomerase from Pseudoalteromonas translucida (strain TAC 125).